The chain runs to 354 residues: UPF0283 membrane protein CGSHiGG_02710 (354 aa).

3 helical membrane-spanning segments follow: residues 57 to 77, 87 to 107, and 211 to 231; these read LLKF…VQWI, IYLA…KEII, and ESAV…FIAW.

This sequence belongs to the UPF0283 family.

The protein resides in the cell inner membrane. This is UPF0283 membrane protein CGSHiGG_02710 from Haemophilus influenzae (strain PittGG).